The chain runs to 541 residues: Chaperonin GroEL (541 aa).

ATP is bound by residues 29–32, 86–90, G413, 477–479, and D493; these read TLGP, DGTTT, and DAL.

The protein belongs to the chaperonin (HSP60) family. Forms a cylinder of 14 subunits composed of two heptameric rings stacked back-to-back. Interacts with the co-chaperonin GroES.

The protein resides in the cytoplasm. The catalysed reaction is ATP + H2O + a folded polypeptide = ADP + phosphate + an unfolded polypeptide.. In terms of biological role, together with its co-chaperonin GroES, plays an essential role in assisting protein folding. The GroEL-GroES system forms a nano-cage that allows encapsulation of the non-native substrate proteins and provides a physical environment optimized to promote and accelerate protein folding. The polypeptide is Chaperonin GroEL (Clostridium botulinum (strain 657 / Type Ba4)).